Reading from the N-terminus, the 467-residue chain is Chromosomal replication initiator protein DnaA (467 aa).

Residues 1-87 (MSSSLWLQCL…VGSRPVVAPK (87 aa)) are domain I, interacts with DnaA modulators. A domain II region spans residues 87-130 (KPAPVRTAADVAAESSAPAQLAQRKPIHKTWDDDSAAADITHRS). The tract at residues 131 to 347 (NVNPKHKFNN…GALNRVIANA (217 aa)) is domain III, AAA+ region. Gly175, Gly177, Lys178, and Thr179 together coordinate ATP. A domain IV, binds dsDNA region spans residues 348 to 467 (NFTGRPITID…YSNLIRTLSS (120 aa)).

This sequence belongs to the DnaA family. Oligomerizes as a right-handed, spiral filament on DNA at oriC.

It localises to the cytoplasm. In terms of biological role, plays an essential role in the initiation and regulation of chromosomal replication. ATP-DnaA binds to the origin of replication (oriC) to initiate formation of the DNA replication initiation complex once per cell cycle. Binds the DnaA box (a 9 base pair repeat at the origin) and separates the double-stranded (ds)DNA. Forms a right-handed helical filament on oriC DNA; dsDNA binds to the exterior of the filament while single-stranded (ss)DNA is stabiized in the filament's interior. The ATP-DnaA-oriC complex binds and stabilizes one strand of the AT-rich DNA unwinding element (DUE), permitting loading of DNA polymerase. After initiation quickly degrades to an ADP-DnaA complex that is not apt for DNA replication. Binds acidic phospholipids. The polypeptide is Chromosomal replication initiator protein DnaA (Vibrio cholerae serotype O1 (strain ATCC 39315 / El Tor Inaba N16961)).